A 172-amino-acid polypeptide reads, in one-letter code: Probable phosphatase YqeG (172 aa).

Has low dephosphorylation activity on GMP and glucose-6-phosphate. The protein is Probable phosphatase YqeG (yqeG) of Bacillus subtilis (strain 168).